We begin with the raw amino-acid sequence, 278 residues long: MLVAEGGANILLELDHRGVLYRCNVRDKSLKVNNEYTYKNYRYINQVVRPLLGDCIPEMELVDIPYDRISGIIGDFVGDPDSDHVSALTIKNLRPTNVYGEKIRYDDHFTKVYHDDTMEHILVEIKPKWLHHAKFCRNCTHNNLKNRKIPYCYALMVVDPSHVSDMLLHTGIAFPRKFLIKFVDYFSKSDNILAKLHDIQKNLDSNVSMNDIKSIDDVSDAFLLNMTLKDVSCFIEWTREPDSLEVNVVDVDMKLVSKLDHWVNTHIQLSNSSNLVHH.

The EXKPK motif motif lies at 124–128 (EIKPK).

This sequence belongs to the IPK1 type 1 family.

It is found in the nucleus. It carries out the reaction 1D-myo-inositol 1,3,4,5,6-pentakisphosphate + ATP = 1D-myo-inositol hexakisphosphate + ADP + H(+). In terms of biological role, has kinase activity and phosphorylates inositol-1,3,4,5,6-pentakisphosphate (Ins(1,3,4,5,6)P5) to produce 1,2,3,4,5,6-hexakisphosphate (InsP6), also known as phytate. The chain is Inositol-pentakisphosphate 2-kinase (IPK1) from Candida glabrata (strain ATCC 2001 / BCRC 20586 / JCM 3761 / NBRC 0622 / NRRL Y-65 / CBS 138) (Yeast).